Here is a 194-residue protein sequence, read N- to C-terminus: NADH-quinone oxidoreductase subunit B (194 aa).

Pro residues predominate over residues 1–11; sequence MGVIATPPPSV. The segment at 1–24 is disordered; the sequence is MGVIATPPPSVQGPSSQVPSSAPI. A compositionally biased stretch (low complexity) spans 12–21; sequence QGPSSQVPSS. Positions 72, 73, 137, and 167 each coordinate [4Fe-4S] cluster.

Belongs to the complex I 20 kDa subunit family. NDH-1 is composed of 14 different subunits. Subunits NuoB, C, D, E, F, and G constitute the peripheral sector of the complex. [4Fe-4S] cluster serves as cofactor.

The protein localises to the cell inner membrane. The catalysed reaction is a quinone + NADH + 5 H(+)(in) = a quinol + NAD(+) + 4 H(+)(out). NDH-1 shuttles electrons from NADH, via FMN and iron-sulfur (Fe-S) centers, to quinones in the respiratory chain. The immediate electron acceptor for the enzyme in this species is believed to be ubiquinone. Couples the redox reaction to proton translocation (for every two electrons transferred, four hydrogen ions are translocated across the cytoplasmic membrane), and thus conserves the redox energy in a proton gradient. This is NADH-quinone oxidoreductase subunit B from Rhodospirillum centenum (strain ATCC 51521 / SW).